Reading from the N-terminus, the 264-residue chain is S-adenosylmethionine decarboxylase proenzyme (264 aa).

Catalysis depends on Ser-113, which acts as the Schiff-base intermediate with substrate; via pyruvic acid. Ser-113 carries the post-translational modification Pyruvic acid (Ser); by autocatalysis. His-118 acts as the Proton acceptor; for processing activity in catalysis. Cys-141 serves as the catalytic Proton donor; for catalytic activity.

The protein belongs to the prokaryotic AdoMetDC family. Type 2 subfamily. In terms of assembly, heterooctamer of four alpha and four beta chains arranged as a tetramer of alpha/beta heterodimers. Pyruvate is required as a cofactor. Is synthesized initially as an inactive proenzyme. Formation of the active enzyme involves a self-maturation process in which the active site pyruvoyl group is generated from an internal serine residue via an autocatalytic post-translational modification. Two non-identical subunits are generated from the proenzyme in this reaction, and the pyruvate is formed at the N-terminus of the alpha chain, which is derived from the carboxyl end of the proenzyme. The post-translation cleavage follows an unusual pathway, termed non-hydrolytic serinolysis, in which the side chain hydroxyl group of the serine supplies its oxygen atom to form the C-terminus of the beta chain, while the remainder of the serine residue undergoes an oxidative deamination to produce ammonia and the pyruvoyl group blocking the N-terminus of the alpha chain.

The enzyme catalyses S-adenosyl-L-methionine + H(+) = S-adenosyl 3-(methylsulfanyl)propylamine + CO2. It functions in the pathway amine and polyamine biosynthesis; S-adenosylmethioninamine biosynthesis; S-adenosylmethioninamine from S-adenosyl-L-methionine: step 1/1. Its function is as follows. Catalyzes the decarboxylation of S-adenosylmethionine to S-adenosylmethioninamine (dcAdoMet), the propylamine donor required for the synthesis of the polyamines spermine and spermidine from the diamine putrescine. The protein is S-adenosylmethionine decarboxylase proenzyme of Pseudomonas paraeruginosa (strain DSM 24068 / PA7) (Pseudomonas aeruginosa (strain PA7)).